Here is an 851-residue protein sequence, read N- to C-terminus: MAGASSYFSLRRLLLLLLPLVPLLGATTAAAAGANSSVTYDHRSLIISGRRRLLISTSIHYPRSVPEMWPKLVAEAKDGGADCVETYVFWNGHEPAQGQYYFEERFDLVRFAKIVKDAGLYMILRIGPFVAAEWTFGGVPVWLHYAPGTVFRTNNEPFKSHMKRFTTYIVDMMKKEQFFASQGGHIILAQVENEYGDMEQAYGAGAKPYAMWAASMALAQNTGVPWIMCQQYDAPDPVINTCNSFYCDQFKPNSPTKPKFWTENWPGWFQTFGESNPHRPPEDVAFSVARFFGKGGSLQNYYVYHGGTNFGRTTGGPFITTSYDYDAPIDEYGLRRLPKWAHLRDLHKSIKLGEHTLLYGNSSFVSLGPQQEADVYTDQSGGCVAFLSNVDSEKDKVVTFQSRSYDLPAWSVSILPDCKNVAFNTAKVRSQTLMMDMVPANLESSKVDGWSIFREKYGIWGNIDLVRNGFVDHINTTKDSTDYLWYTTSFDVDGSHLAGGNHVLHIESKGHAVQAFLNNELIGSAYGNGSKSNFSVEMPVNLRAGKNKLSLLSMTVGLQNGGPMYEWAGAGITSVKISGMENRIIDLSSNKWEYKIGLEGEYYSLFKADKGKDIRWMPQSEPPKNQPMTWYKVNVDVPQGDDPVGLDMQSMGKGLAWLNGNAIGRYWPRISPVSDRCTSSCDYRGTFSPNKCRRGCGQPTQRWYHVPRSWFHPSGNTLVIFEEKGGDPTKITFSRRTVASVCSFVSEHYPSIDLESWDRNTQNDGRDAAKVQLSCPKGKSISSVKFVSFGNPSGTCRSYQQGSCHHPNSISVVEKACLNMNGCTVSLSDEGFGEDLCPGVTKTLAIEADCS.

The N-terminal stretch at 1-29 is a signal peptide; the sequence is MAGASSYFSLRRLLLLLLPLVPLLGATTA. A glycan (N-linked (GlcNAc...) asparagine) is linked at Asn-35. The active-site Proton donor is Glu-194. Residue Glu-263 is the Nucleophile of the active site. N-linked (GlcNAc...) asparagine glycosylation is found at Asn-361, Asn-475, Asn-528, and Asn-533. The SUEL-type lectin domain occupies 765–851; the sequence is GRDAAKVQLS…KTLAIEADCS (87 aa).

This sequence belongs to the glycosyl hydrolase 35 family.

It localises to the secreted. The protein resides in the extracellular space. Its subcellular location is the apoplast. It carries out the reaction Hydrolysis of terminal non-reducing beta-D-galactose residues in beta-D-galactosides.. In Oryza sativa subsp. japonica (Rice), this protein is Beta-galactosidase 3.